Here is a 279-residue protein sequence, read N- to C-terminus: Acyl-[acyl-carrier-protein]--UDP-N-acetylglucosamine O-acyltransferase (279 aa).

The protein belongs to the transferase hexapeptide repeat family. LpxA subfamily. In terms of assembly, homotrimer.

It localises to the cytoplasm. It carries out the reaction a (3R)-hydroxyacyl-[ACP] + UDP-N-acetyl-alpha-D-glucosamine = a UDP-3-O-[(3R)-3-hydroxyacyl]-N-acetyl-alpha-D-glucosamine + holo-[ACP]. Its pathway is glycolipid biosynthesis; lipid IV(A) biosynthesis; lipid IV(A) from (3R)-3-hydroxytetradecanoyl-[acyl-carrier-protein] and UDP-N-acetyl-alpha-D-glucosamine: step 1/6. Involved in the biosynthesis of lipid A, a phosphorylated glycolipid that anchors the lipopolysaccharide to the outer membrane of the cell. This chain is Acyl-[acyl-carrier-protein]--UDP-N-acetylglucosamine O-acyltransferase, found in Mesorhizobium japonicum (strain LMG 29417 / CECT 9101 / MAFF 303099) (Mesorhizobium loti (strain MAFF 303099)).